The primary structure comprises 225 residues: Uridylate kinase (225 aa).

D6 contacts Mg(2+). ATP is bound at residue 9 to 10 (GS). G44 is a binding site for UMP. 2 residues coordinate ATP: G45 and R49. UMP is bound by residues D66 and 114–120 (THPGHTT). 2 residues coordinate Mg(2+): T120 and D121. The ATP site is built by T140, N141, Y146, and D149. G179 is a UMP binding site. S182 is a binding site for Mg(2+). S182 lines the ATP pocket.

It belongs to the UMP kinase family. Homohexamer; trimer of dimers.

It localises to the cytoplasm. It catalyses the reaction UMP + ATP = UDP + ADP. It participates in pyrimidine metabolism; CTP biosynthesis via de novo pathway; UDP from UMP (UMPK route): step 1/1. With respect to regulation, inhibited by UTP. Its function is as follows. Catalyzes the reversible phosphorylation of UMP to UDP, with ATP as the most efficient phosphate donor. The protein is Uridylate kinase (pyrH) of Pyrococcus furiosus (strain ATCC 43587 / DSM 3638 / JCM 8422 / Vc1).